The sequence spans 520 residues: uncharacterized protein (520 aa).

9 helical membrane passes run 38 to 58 (VVLI…IPGG), 84 to 104 (IAIY…GIFN), 105 to 125 (IGIS…ILKV), 138 to 158 (IITV…VATL), 167 to 187 (VVSA…LVET), 220 to 240 (FGWL…AVVL), 271 to 291 (FLSF…VYTA), 318 to 338 (IAIG…SVLI), and 355 to 375 (ASLV…MVYF).

Its subcellular location is the cell membrane. This is an uncharacterized protein from Mycoplasma genitalium (strain ATCC 33530 / DSM 19775 / NCTC 10195 / G37) (Mycoplasmoides genitalium).